The following is a 252-amino-acid chain: 1-(5-phosphoribosyl)-5-[(5-phosphoribosylamino)methylideneamino] imidazole-4-carboxamide isomerase (252 aa).

The active-site Proton acceptor is the Asp-10. The active-site Proton donor is Asp-129.

Belongs to the HisA/HisF family.

It localises to the cytoplasm. The enzyme catalyses 1-(5-phospho-beta-D-ribosyl)-5-[(5-phospho-beta-D-ribosylamino)methylideneamino]imidazole-4-carboxamide = 5-[(5-phospho-1-deoxy-D-ribulos-1-ylimino)methylamino]-1-(5-phospho-beta-D-ribosyl)imidazole-4-carboxamide. It participates in amino-acid biosynthesis; L-histidine biosynthesis; L-histidine from 5-phospho-alpha-D-ribose 1-diphosphate: step 4/9. The protein is 1-(5-phosphoribosyl)-5-[(5-phosphoribosylamino)methylideneamino] imidazole-4-carboxamide isomerase of Frankia casuarinae (strain DSM 45818 / CECT 9043 / HFP020203 / CcI3).